The chain runs to 603 residues: Mitochondrial distribution and morphology protein 34 (603 aa).

Residues 1-205 (MAFNFNWSPL…SPEYQEIETE (205 aa)) enclose the SMP-LTD domain. A compositionally biased stretch (low complexity) spans 320 to 332 (KSGASSVASGSTG). Disordered stretches follow at residues 320–511 (KSGA…PLLR) and 558–603 (IARK…AYVA). The segment covering 333-351 (NETLSSRPTLASSYSTSAG) has biased composition (polar residues). Over residues 371–380 (VVDLRRKDGA) the composition is skewed to basic and acidic residues. Over residues 383–403 (GVSTEANTPLPSTQVSDTSSV) the composition is skewed to polar residues. Positions 452 to 463 (PLLAPAPLIPNA) are enriched in low complexity. Residues 500–509 (RQAQQSTSPL) show a composition bias toward polar residues. Residues 558–570 (IARKVQEEKDKSS) show a composition bias toward basic and acidic residues.

The protein belongs to the MDM34 family. As to quaternary structure, component of the ER-mitochondria encounter structure (ERMES) or MDM complex, composed of mmm1, mdm10, mdm12 and mdm34.

The protein localises to the mitochondrion outer membrane. Component of the ERMES/MDM complex, which serves as a molecular tether to connect the endoplasmic reticulum (ER) and mitochondria. Components of this complex are involved in the control of mitochondrial shape and protein biogenesis, and function in nonvesicular lipid trafficking between the ER and mitochondria. Mdm34 is required for the interaction of the ER-resident membrane protein mmm1 and the outer mitochondrial membrane-resident beta-barrel protein mdm10. The polypeptide is Mitochondrial distribution and morphology protein 34 (Pyrenophora tritici-repentis (strain Pt-1C-BFP) (Wheat tan spot fungus)).